Reading from the N-terminus, the 1093-residue chain is Mediator of RNA polymerase II transcription subunit 14 (1093 aa).

2 disordered regions span residues 1–62 (MPGV…IDGH) and 1034–1065 (ETKS…ANDT). Polar residues predominate over residues 19-31 (DTQTPSNGDNLRN). A compositionally biased stretch (basic and acidic residues) spans 41 to 62 (KGDKDHDPDKESYAGKPRIDGH). A compositionally biased stretch (polar residues) spans 1040–1056 (DYSTQPAPENQSQTGAP).

This sequence belongs to the Mediator complex subunit 14 family. As to quaternary structure, component of the Mediator complex.

The protein resides in the nucleus. Its function is as follows. Component of the Mediator complex, a coactivator involved in the regulated transcription of nearly all RNA polymerase II-dependent genes. Mediator functions as a bridge to convey information from gene-specific regulatory proteins to the basal RNA polymerase II transcription machinery. Mediator is recruited to promoters by direct interactions with regulatory proteins and serves as a scaffold for the assembly of a functional preinitiation complex with RNA polymerase II and the general transcription factors. The protein is Mediator of RNA polymerase II transcription subunit 14 (rgr1) of Aspergillus fumigatus (strain ATCC MYA-4609 / CBS 101355 / FGSC A1100 / Af293) (Neosartorya fumigata).